The primary structure comprises 495 residues: GTPase Der (495 aa).

2 consecutive EngA-type G domains span residues 3-166 (PVVA…VQDE) and 208-381 (IKLA…SCAT). GTP contacts are provided by residues 9 to 16 (GRPNVGKS), 56 to 60 (DTGGI), 118 to 121 (NKTD), 214 to 221 (GRPNVGKS), 261 to 265 (DTAGV), and 326 to 329 (NKWD). Positions 382–466 (RRVSTAMLTR…PIRIQFKEGE (85 aa)) constitute a KH-like domain.

It belongs to the TRAFAC class TrmE-Era-EngA-EngB-Septin-like GTPase superfamily. EngA (Der) GTPase family. In terms of assembly, associates with the 50S ribosomal subunit.

GTPase that plays an essential role in the late steps of ribosome biogenesis. This Pectobacterium atrosepticum (strain SCRI 1043 / ATCC BAA-672) (Erwinia carotovora subsp. atroseptica) protein is GTPase Der.